The chain runs to 798 residues: Putative antiporter subunit mnhA2 (798 aa).

Transmembrane regions (helical) follow at residues 1 to 21 (MSLV…LFTL), 33 to 53 (IALL…PSVM), 78 to 98 (GLSL…VYYA), 109 to 129 (LPRF…IVTA), 133 to 153 (ILMY…IVYW), 167 to 187 (FMIT…IYIV), 209 to 229 (FIPI…QFPF), 241 to 261 (TPVS…FLLF), 272 to 292 (FYIY…AVNA), 300 to 320 (AILA…VGLG), 337 to 357 (MILF…GALF), 381 to 401 (VFPI…GIPF), 431 to 451 (IITV…VYMI), 472 to 492 (PFLF…IFFI), 526 to 546 (GFNL…IMAL), 593 to 613 (ITIT…QAGF), 625 to 645 (GPIE…LTFI), 649 to 669 (LTMV…FILM), 674 to 694 (LALT…VSFS), 710 to 730 (AVKI…VFIA), and 766 to 786 (IDTL…YTLL).

The protein belongs to the CPA3 antiporters (TC 2.A.63) subunit A family. May form a heterooligomeric complex that consists of seven subunits: mnhA2, mnhB2, mnhC2, mnhD2, mnhE2, mnhF2 and mnhG2.

It localises to the cell membrane. The chain is Putative antiporter subunit mnhA2 (mnhA2) from Staphylococcus saprophyticus subsp. saprophyticus (strain ATCC 15305 / DSM 20229 / NCIMB 8711 / NCTC 7292 / S-41).